The primary structure comprises 298 residues: Probable endonuclease 4 (298 aa).

His69, His111, Glu146, Asp180, His183, His215, Asp228, His230, and Glu260 together coordinate Zn(2+).

This sequence belongs to the AP endonuclease 2 family. Zn(2+) is required as a cofactor.

The enzyme catalyses Endonucleolytic cleavage to 5'-phosphooligonucleotide end-products.. In terms of biological role, endonuclease IV plays a role in DNA repair. It cleaves phosphodiester bonds at apurinic or apyrimidinic (AP) sites, generating a 3'-hydroxyl group and a 5'-terminal sugar phosphate. The polypeptide is Probable endonuclease 4 (Bacillus cytotoxicus (strain DSM 22905 / CIP 110041 / 391-98 / NVH 391-98)).